The primary structure comprises 132 residues: Small ribosomal subunit protein uS12 (132 aa).

Asp-89 is modified (3-methylthioaspartic acid). Residues 103-132 (DTSGVADRRQSRSKYGAKQPKEGGAAKGKK) form a disordered region.

It belongs to the universal ribosomal protein uS12 family. As to quaternary structure, part of the 30S ribosomal subunit. Contacts proteins S8 and S17. May interact with IF1 in the 30S initiation complex.

Functionally, with S4 and S5 plays an important role in translational accuracy. Its function is as follows. Interacts with and stabilizes bases of the 16S rRNA that are involved in tRNA selection in the A site and with the mRNA backbone. Located at the interface of the 30S and 50S subunits, it traverses the body of the 30S subunit contacting proteins on the other side and probably holding the rRNA structure together. The combined cluster of proteins S8, S12 and S17 appears to hold together the shoulder and platform of the 30S subunit. The sequence is that of Small ribosomal subunit protein uS12 from Chlorobium phaeovibrioides (strain DSM 265 / 1930) (Prosthecochloris vibrioformis (strain DSM 265)).